The sequence spans 474 residues: 2-succinylbenzoate--CoA ligase (474 aa).

The protein belongs to the ATP-dependent AMP-binding enzyme family. MenE subfamily.

It carries out the reaction 2-succinylbenzoate + ATP + CoA = 2-succinylbenzoyl-CoA + AMP + diphosphate. It functions in the pathway quinol/quinone metabolism; 1,4-dihydroxy-2-naphthoate biosynthesis; 1,4-dihydroxy-2-naphthoate from chorismate: step 5/7. The protein operates within quinol/quinone metabolism; menaquinone biosynthesis. Converts 2-succinylbenzoate (OSB) to 2-succinylbenzoyl-CoA (OSB-CoA). The protein is 2-succinylbenzoate--CoA ligase of Staphylococcus epidermidis (strain ATCC 35984 / DSM 28319 / BCRC 17069 / CCUG 31568 / BM 3577 / RP62A).